A 263-amino-acid chain; its full sequence is Phosphatidylglycerol--prolipoprotein diacylglyceryl transferase (263 aa).

Transmembrane regions (helical) follow at residues 15–35 (ISIH…VYLA), 52–72 (FILL…VIFQ), 83–103 (IFAI…GAAV), and 112–132 (AIAV…AQSI). Arginine 134 contacts a 1,2-diacyl-sn-glycero-3-phospho-(1'-sn-glycerol). The next 3 helical transmembrane spans lie at 170–190 (VPTF…ILGL), 200–220 (GDVT…IEGM), and 227–247 (FVGL…GAVL).

It belongs to the Lgt family.

It is found in the cell membrane. It catalyses the reaction L-cysteinyl-[prolipoprotein] + a 1,2-diacyl-sn-glycero-3-phospho-(1'-sn-glycerol) = an S-1,2-diacyl-sn-glyceryl-L-cysteinyl-[prolipoprotein] + sn-glycerol 1-phosphate + H(+). It participates in protein modification; lipoprotein biosynthesis (diacylglyceryl transfer). In terms of biological role, catalyzes the transfer of the diacylglyceryl group from phosphatidylglycerol to the sulfhydryl group of the N-terminal cysteine of a prolipoprotein, the first step in the formation of mature lipoproteins. This Streptococcus thermophilus (strain ATCC BAA-491 / LMD-9) protein is Phosphatidylglycerol--prolipoprotein diacylglyceryl transferase.